Reading from the N-terminus, the 593-residue chain is ETS-related transcription factor Elf-2 (593 aa).

A disordered region spans residues 1–34 (MASAVVDSGGSALELPSDGGENQEGGDTGPDCPA). The residue at position 107 (Ser-107) is a Phosphoserine. Residues 146–199 (VEVSTEESEPMDASPIPTSPDSHEPMKKKKVGRKPKTQQSPVSNGSPELGIKKK) are disordered. Positions 171 to 181 (MKKKKVGRKPK) are enriched in basic residues. Thr-182 is subject to Phosphothreonine. Over residues 182-191 (TQQSPVSNGS) the composition is skewed to polar residues. Phosphoserine occurs at positions 185 and 191. A DNA-binding region (ETS) is located at residues 208–290 (TYLWEFLLDL…EGQRLVYQFK (83 aa)). A disordered region spans residues 362–383 (TSPTHDGSSRSPTTTAPVSAAA). 2 positions are modified to phosphoserine: Ser-363 and Ser-372. A compositionally biased stretch (low complexity) spans 370–383 (SRSPTTTAPVSAAA). Thr-376 is subject to Phosphothreonine. A Phosphoserine modification is found at Ser-432. The residue at position 496 (Arg-496) is an Omega-N-methylarginine. Thr-523 is subject to Phosphothreonine. Lys-538 participates in a covalent cross-link: Glycyl lysine isopeptide (Lys-Gly) (interchain with G-Cter in SUMO2).

It belongs to the ETS family. Interacts with LIM domains of LMO2. Interacts via its N-terminal region with RUNX1. In terms of tissue distribution, expressed in all tissues examined. Highest levels in thymocytes and bone marrow.

The protein resides in the nucleus. In terms of biological role, probably transcriptionally activates the LYN and BLK promoters and acts synergistically with RUNX1 to transactivate the BLK promoter. The protein is ETS-related transcription factor Elf-2 of Mus musculus (Mouse).